The primary structure comprises 289 residues: Light-independent protochlorophyllide reductase iron-sulfur ATP-binding protein (289 aa).

Residues 10–15 (GIGKST) and K39 contribute to the ATP site. S14 is a binding site for Mg(2+). [4Fe-4S] cluster contacts are provided by C95 and C129. Residue 180–181 (NR) participates in ATP binding.

The protein belongs to the NifH/BchL/ChlL family. As to quaternary structure, homodimer. Protochlorophyllide reductase is composed of three subunits; ChlL, ChlN and ChlB. The cofactor is [4Fe-4S] cluster.

Its subcellular location is the plastid. It is found in the chloroplast. It carries out the reaction chlorophyllide a + oxidized 2[4Fe-4S]-[ferredoxin] + 2 ADP + 2 phosphate = protochlorophyllide a + reduced 2[4Fe-4S]-[ferredoxin] + 2 ATP + 2 H2O. It functions in the pathway porphyrin-containing compound metabolism; chlorophyll biosynthesis (light-independent). In terms of biological role, component of the dark-operative protochlorophyllide reductase (DPOR) that uses Mg-ATP and reduced ferredoxin to reduce ring D of protochlorophyllide (Pchlide) to form chlorophyllide a (Chlide). This reaction is light-independent. The L component serves as a unique electron donor to the NB-component of the complex, and binds Mg-ATP. This is Light-independent protochlorophyllide reductase iron-sulfur ATP-binding protein from Marchantia polymorpha (Common liverwort).